Reading from the N-terminus, the 125-residue chain is Large ribosomal subunit protein bL19 (125 aa).

It belongs to the bacterial ribosomal protein bL19 family.

Functionally, this protein is located at the 30S-50S ribosomal subunit interface and may play a role in the structure and function of the aminoacyl-tRNA binding site. This is Large ribosomal subunit protein bL19 from Ehrlichia canis (strain Jake).